The following is a 368-amino-acid chain: Protein ALTERED XYLOGLUCAN 9 (368 aa).

Residues 1–32 lie on the Cytoplasmic side of the membrane; it reads MLGAIHLGVLAACFVLFVPMAMAGWHLSRNKM. Residues 33-53 form a helical membrane-spanning segment; it reads LFFSGALFISLAVCVHLTPYF. The Lumenal portion of the chain corresponds to 54–368; that stretch reads PSVSDIVASV…ALLIESHQSL (315 aa). N99, N137, and N235 each carry an N-linked (GlcNAc...) asparagine glycan.

It localises to the golgi apparatus membrane. Functionally, component of the plant cell wall polysaccharide acetylation pathway. Does not directly catalyze O-acetylation of xyloglucan but exhibits weak acetylesterase activity in vitro. The sequence is that of Protein ALTERED XYLOGLUCAN 9 from Arabidopsis thaliana (Mouse-ear cress).